Here is a 316-residue protein sequence, read N- to C-terminus: Small ribosomal subunit biogenesis GTPase RsgA (316 aa).

The interval 1 to 20 is disordered; it reads MSKLSHQQQRRIHNHRQNKL. The span at 8 to 18 shows a compositional bias: basic residues; sequence QQRRIHNHRQN. Residues 92-251 form the CP-type G domain; sequence AGKLKPVASN…IIDTPGVRGF (160 aa). Residues 139–142 and 193–201 each bind GTP; these read NKSD and GQSGVGKSS. Residues cysteine 275, cysteine 280, histidine 282, and cysteine 288 each coordinate Zn(2+).

It belongs to the TRAFAC class YlqF/YawG GTPase family. RsgA subfamily. In terms of assembly, monomer. Associates with 30S ribosomal subunit, binds 16S rRNA. Zn(2+) serves as cofactor.

It is found in the cytoplasm. In terms of biological role, one of several proteins that assist in the late maturation steps of the functional core of the 30S ribosomal subunit. Helps release RbfA from mature subunits. May play a role in the assembly of ribosomal proteins into the subunit. Circularly permuted GTPase that catalyzes slow GTP hydrolysis, GTPase activity is stimulated by the 30S ribosomal subunit. In Dichelobacter nodosus (strain VCS1703A), this protein is Small ribosomal subunit biogenesis GTPase RsgA.